The chain runs to 208 residues: Uracil phosphoribosyltransferase (208 aa).

5-phospho-alpha-D-ribose 1-diphosphate is bound by residues R78, R103, and 130-138; that span reads DPMLATANS. Uracil is bound by residues I193 and 198-200; that span reads GDA. D199 is a binding site for 5-phospho-alpha-D-ribose 1-diphosphate.

Belongs to the UPRTase family. Mg(2+) is required as a cofactor.

The enzyme catalyses UMP + diphosphate = 5-phospho-alpha-D-ribose 1-diphosphate + uracil. It functions in the pathway pyrimidine metabolism; UMP biosynthesis via salvage pathway; UMP from uracil: step 1/1. With respect to regulation, allosterically activated by GTP. Its function is as follows. Catalyzes the conversion of uracil and 5-phospho-alpha-D-ribose 1-diphosphate (PRPP) to UMP and diphosphate. The chain is Uracil phosphoribosyltransferase from Brucella canis (strain ATCC 23365 / NCTC 10854 / RM-666).